A 478-amino-acid polypeptide reads, in one-letter code: Ribosomal RNA small subunit methyltransferase F (478 aa).

S-adenosyl-L-methionine contacts are provided by residues 123-129, glutamate 147, aspartate 174, and aspartate 192; that span reads AAAPGSK. The active-site Nucleophile is cysteine 245.

The protein belongs to the class I-like SAM-binding methyltransferase superfamily. RsmB/NOP family.

It is found in the cytoplasm. It carries out the reaction cytidine(1407) in 16S rRNA + S-adenosyl-L-methionine = 5-methylcytidine(1407) in 16S rRNA + S-adenosyl-L-homocysteine + H(+). In terms of biological role, specifically methylates the cytosine at position 1407 (m5C1407) of 16S rRNA. The protein is Ribosomal RNA small subunit methyltransferase F of Vibrio parahaemolyticus serotype O3:K6 (strain RIMD 2210633).